Here is an 874-residue protein sequence, read N- to C-terminus: Alanine--tRNA ligase (874 aa).

Zn(2+) contacts are provided by histidine 562, histidine 566, cysteine 665, and histidine 669.

The protein belongs to the class-II aminoacyl-tRNA synthetase family. It depends on Zn(2+) as a cofactor.

It is found in the cytoplasm. It carries out the reaction tRNA(Ala) + L-alanine + ATP = L-alanyl-tRNA(Ala) + AMP + diphosphate. In terms of biological role, catalyzes the attachment of alanine to tRNA(Ala) in a two-step reaction: alanine is first activated by ATP to form Ala-AMP and then transferred to the acceptor end of tRNA(Ala). Also edits incorrectly charged Ser-tRNA(Ala) and Gly-tRNA(Ala) via its editing domain. This is Alanine--tRNA ligase from Pseudomonas syringae pv. syringae (strain B728a).